A 359-amino-acid polypeptide reads, in one-letter code: Membrane-bound lytic murein transglycosylase C (359 aa).

A signal peptide spans 1 to 16 (MKKYLALALIAPLLIS). Cys17 carries N-palmitoyl cysteine lipidation. A lipid anchor (S-diacylglycerol cysteine) is attached at Cys17.

Belongs to the transglycosylase Slt family.

The protein localises to the cell outer membrane. The enzyme catalyses Exolytic cleavage of the (1-&gt;4)-beta-glycosidic linkage between N-acetylmuramic acid (MurNAc) and N-acetylglucosamine (GlcNAc) residues in peptidoglycan, from either the reducing or the non-reducing ends of the peptidoglycan chains, with concomitant formation of a 1,6-anhydrobond in the MurNAc residue.. Functionally, murein-degrading enzyme. May play a role in recycling of muropeptides during cell elongation and/or cell division. In Escherichia coli O81 (strain ED1a), this protein is Membrane-bound lytic murein transglycosylase C.